A 1356-amino-acid polypeptide reads, in one-letter code: Protein NPAT (1356 aa).

The LisH domain occupies 3-35; it reads LPSDVARLVLGYLQQEKLSSTCRSFILESPNLR. 3 stretches are compositionally biased toward polar residues: residues 180-196, 381-394, and 607-624; these read NSPA…NSAL, FDAS…SNHS, and STET…SITS. Disordered stretches follow at residues 180 to 242, 379 to 446, 589 to 688, 916 to 1092, 1107 to 1130, 1180 to 1258, and 1276 to 1342; these read NSPA…DSLQ, SSFD…RSVE, NLLN…CSDV, GVPK…ASSP, QKEN…GAAG, MQFN…ENSV, and TDGS…FPAG. Positions 638–647 are enriched in pro residues; sequence PPHPMVPPIS. The span at 648 to 664 shows a compositional bias: low complexity; that stretch reads PSIKGSSSDSDGSSLPL. Positions 666–688 are enriched in polar residues; it reads VSSSVGVSTPVNTSNVEQNCSDV. Residues 917–928 are compositionally biased toward low complexity; that stretch reads VPKLSLPPKSQK. 4 stretches are compositionally biased toward polar residues: residues 944–959, 982–991, 1004–1022, and 1030–1042; these read TAAT…SSRM, TSTTNPSTKG, TAAN…SAAP, and TMNT…PAKQ. Residues 1043 to 1052 show a composition bias toward basic and acidic residues; sequence NNKDSGKADK. Over residues 1054–1063 the composition is skewed to polar residues; sequence APSTEANSKC. Composition is skewed to basic and acidic residues over residues 1107 to 1120 and 1205 to 1218; these read QKEN…EVSK and IDDR…DHMK. 2 stretches are compositionally biased toward polar residues: residues 1249–1258 and 1277–1289; these read ASETGSENSV and DGSS…TQQI. Basic and acidic residues predominate over residues 1300–1309; it reads KLDEPDEYGR. The segment covering 1323 to 1334 has biased composition (basic residues); the sequence is LKRKKMKKHRKK.

Belongs to the NPAT family.

Its subcellular location is the nucleus. Its function is as follows. Required for progression through the G1 and S phases of the cell cycle and for S phase entry. Activates transcription of the histone H2A, histone H2B, histone H3 and histone H4 genes. The chain is Protein NPAT (npat) from Xenopus laevis (African clawed frog).